The chain runs to 219 residues: ATP-dependent Clp protease proteolytic subunit 1, mitochondrial (219 aa).

The transit peptide at 1 to 23 (MLRRILTTSSVRNLTSSTQARVG) directs the protein to the mitochondrion. Catalysis depends on Ser118, which acts as the Nucleophile. Residue His143 is part of the active site.

The protein belongs to the peptidase S14 family. In terms of assembly, tetradecamer that assembles into a two heptameric rings with a central cavity.

The protein localises to the mitochondrion matrix. It carries out the reaction Hydrolysis of proteins to small peptides in the presence of ATP and magnesium. alpha-casein is the usual test substrate. In the absence of ATP, only oligopeptides shorter than five residues are hydrolyzed (such as succinyl-Leu-Tyr-|-NHMec, and Leu-Tyr-Leu-|-Tyr-Trp, in which cleavage of the -Tyr-|-Leu- and -Tyr-|-Trp bonds also occurs).. Its function is as follows. Clp cleaves peptides in various proteins in a process that requires ATP hydrolysis. Clp may be responsible for a fairly general and central housekeeping function rather than for the degradation of specific substrates. The chain is ATP-dependent Clp protease proteolytic subunit 1, mitochondrial from Caenorhabditis briggsae.